A 274-amino-acid polypeptide reads, in one-letter code: Acetyl-coenzyme A carboxylase carboxyl transferase subunit alpha (274 aa).

The region spanning 2–250 (NKEFIKSIVV…KKEIMNAMNE (249 aa)) is the CoA carboxyltransferase C-terminal domain.

It belongs to the AccA family. Acetyl-CoA carboxylase is a heterohexamer composed of biotin carboxyl carrier protein (AccB), biotin carboxylase (AccC) and two subunits each of ACCase subunit alpha (AccA) and ACCase subunit beta (AccD).

It is found in the cytoplasm. The catalysed reaction is N(6)-carboxybiotinyl-L-lysyl-[protein] + acetyl-CoA = N(6)-biotinyl-L-lysyl-[protein] + malonyl-CoA. The protein operates within lipid metabolism; malonyl-CoA biosynthesis; malonyl-CoA from acetyl-CoA: step 1/1. In terms of biological role, component of the acetyl coenzyme A carboxylase (ACC) complex. First, biotin carboxylase catalyzes the carboxylation of biotin on its carrier protein (BCCP) and then the CO(2) group is transferred by the carboxyltransferase to acetyl-CoA to form malonyl-CoA. This chain is Acetyl-coenzyme A carboxylase carboxyl transferase subunit alpha, found in Clostridium botulinum (strain Alaska E43 / Type E3).